The sequence spans 349 residues: Inositol 2-dehydrogenase (349 aa).

It belongs to the Gfo/Idh/MocA family. Homotetramer.

The catalysed reaction is myo-inositol + NAD(+) = scyllo-inosose + NADH + H(+). Involved in the oxidation of myo-inositol (MI) to 2-keto-myo-inositol (2KMI or 2-inosose). The protein is Inositol 2-dehydrogenase of Mycolicibacterium gilvum (strain PYR-GCK) (Mycobacterium gilvum (strain PYR-GCK)).